Consider the following 428-residue polypeptide: MSAIVDVIAREIIDSRGNPTIEADVLLESGVLGRASVPSGASVGTREAVELRDGDTQRYYGKGVLKAVENVNGEISEEIMGLDATEQCFIDKTLIELDGSENKSRLGANAILAVSLAVAKAAAEESSLPLYRYLGGTNSKWLPVPMMNLINGGVHANNRLDMQEFMIIPLGLPSLREAVRCGAEVFGKLRTLLHKKNLPTTVGDEGGFAPGFAHNEEALGLIVQAIDEAGYQPGSEVAIGVDCASSEFFRDGKYHLAVDGLSLTSAQFIDYLASWVEKYPIISIEDGISEQDWDGWKLLTERLGQTVQLVGDDIFATNTKILKKGINRNIANSILIKINQIGTLTETLNAIEMAKCAGYTAVVSHRSGETEDTMIADIAVGTNALQIKTGSLSRSDRLAKYNQLLRIEEDLGDVAQYAGRSAFYQLKP.

(2R)-2-phosphoglycerate is bound at residue Q163. The active-site Proton donor is E205. Residues D242, E285, and D312 each contribute to the Mg(2+) site. 4 residues coordinate (2R)-2-phosphoglycerate: K337, R366, S367, and K388. The active-site Proton acceptor is the K337.

This sequence belongs to the enolase family. Requires Mg(2+) as cofactor.

The protein localises to the cytoplasm. Its subcellular location is the secreted. It is found in the cell surface. The catalysed reaction is (2R)-2-phosphoglycerate = phosphoenolpyruvate + H2O. Its pathway is carbohydrate degradation; glycolysis; pyruvate from D-glyceraldehyde 3-phosphate: step 4/5. Its function is as follows. Catalyzes the reversible conversion of 2-phosphoglycerate (2-PG) into phosphoenolpyruvate (PEP). It is essential for the degradation of carbohydrates via glycolysis. This Nitrosomonas eutropha (strain DSM 101675 / C91 / Nm57) protein is Enolase.